The chain runs to 55 residues: UPF0391 membrane protein Sfum_0248 (55 aa).

Transmembrane regions (helical) follow at residues 4-24 and 28-48; these read WALI…GGII and AWIA…SLLS.

The protein belongs to the UPF0391 family.

It localises to the cell membrane. The sequence is that of UPF0391 membrane protein Sfum_0248 from Syntrophobacter fumaroxidans (strain DSM 10017 / MPOB).